We begin with the raw amino-acid sequence, 1529 residues long: Myosin-11 (1529 aa).

Positions 11-60 (IVGSHVWIEDSDVAWIDGLVEKINGQDVEVQATNGKKITAKLSKIYPKDM) constitute a Myosin N-terminal SH3-like domain. The Myosin motor domain occupies 65–735 (GGVDDMTKLS…QMAELDARRT (671 aa)). Residues 159–166 (GESGAGKT) and 212–220 (NNNSSRFGK) each bind ATP. Actin-binding regions lie at residues 498-532 (LIEK…YQTF), 534-557 (THKR…AGEV), 592-616 (FPPL…KLQL), and 616-638 (LQQL…KPNN). IQ domains follow at residues 738–767 (LSAA…ATIS), 761–790 (LRKA…QAAA), 786–815 (RQAA…AALV), 809–838 (LHVA…TKAA), 834–863 (QTKA…GVIL), and 857–886 (LKKG…ASRE). Residues 887 to 1059 (TGALKEAKDM…VLRQQAVSIA (173 aa)) are a coiled coil. Residues 993 to 1027 (EQEKQRADDATRKFDEAQESSEDRKKKLEDTEKKA) are compositionally biased toward basic and acidic residues. 2 disordered regions span residues 993–1031 (EQEK…QQLQ) and 1096–1115 (INRR…LNEK). Residues 1163-1472 (DRIIQTIGQA…IANMRVLMTE (310 aa)) form the Dilute domain.

The protein belongs to the TRAFAC class myosin-kinesin ATPase superfamily. Myosin family. Plant myosin class XI subfamily. Homodimer.

The protein localises to the cytoplasm. In terms of biological role, myosin heavy chain that is required for the cell cycle-regulated transport of various organelles and proteins for their segregation. Functions by binding with its tail domain to receptor proteins on organelles and exerting force with its N-terminal motor domain against actin filaments, thereby transporting its cargo along polarized actin cables. Involved in trafficking of Golgi stacks, mitochondria and peroxisomes. The sequence is that of Myosin-11 (XI-E) from Arabidopsis thaliana (Mouse-ear cress).